A 556-amino-acid polypeptide reads, in one-letter code: Phenylalanine--tRNA ligase beta subunit (556 aa).

The region spanning 274–349 (HEPEEMEVDL…ITLGLNKIGY (76 aa)) is the B5 domain. The Mg(2+) site is built by Asp-327, Asp-333, Glu-336, and Glu-337.

The protein belongs to the phenylalanyl-tRNA synthetase beta subunit family. Type 2 subfamily. Tetramer of two alpha and two beta subunits. Requires Mg(2+) as cofactor.

The protein resides in the cytoplasm. The enzyme catalyses tRNA(Phe) + L-phenylalanine + ATP = L-phenylalanyl-tRNA(Phe) + AMP + diphosphate + H(+). In Korarchaeum cryptofilum (strain OPF8), this protein is Phenylalanine--tRNA ligase beta subunit.